Consider the following 907-residue polypeptide: Protein translocase subunit SecA (907 aa).

ATP is bound by residues Gln-87, 105 to 109 (GEGKT), and Asp-512. Residues 870 to 897 (AALAATQPQVREGEKVGRNDPCPCGSGK) form a disordered region. Zn(2+)-binding residues include Cys-891, Cys-893, Cys-902, and His-903.

It belongs to the SecA family. As to quaternary structure, monomer and homodimer. Part of the essential Sec protein translocation apparatus which comprises SecA, SecYEG and auxiliary proteins SecDF-YajC and YidC. Zn(2+) is required as a cofactor.

It is found in the cell inner membrane. It localises to the cytoplasm. It catalyses the reaction ATP + H2O + cellular proteinSide 1 = ADP + phosphate + cellular proteinSide 2.. Functionally, part of the Sec protein translocase complex. Interacts with the SecYEG preprotein conducting channel. Has a central role in coupling the hydrolysis of ATP to the transfer of proteins into and across the cell membrane, serving both as a receptor for the preprotein-SecB complex and as an ATP-driven molecular motor driving the stepwise translocation of polypeptide chains across the membrane. This Shewanella piezotolerans (strain WP3 / JCM 13877) protein is Protein translocase subunit SecA.